The sequence spans 433 residues: AP-2 complex subunit mu (433 aa).

Residues 168–432 (RNELFLDVLE…IGRSGIYETR (265 aa)) enclose the MHD domain. Lys339, Lys343, and Lys352 together coordinate a 1,2-diacyl-sn-glycero-3-phospho-(1D-myo-inositol-3,4,5-trisphosphate).

This sequence belongs to the adaptor complexes medium subunit family. As to quaternary structure, adaptor protein complex 2 (AP-2) is a heterotetramer composed of two large adaptins (alpha-type subunit and beta-type subunit), a medium adaptin (mu-type subunit) and a small adaptin (sigma-type subunit).

It localises to the cell membrane. The protein localises to the membrane. It is found in the coated pit. In terms of biological role, component of the adaptor complexes which link clathrin to receptors in coated vesicles. Clathrin-associated protein complexes are believed to interact with the cytoplasmic tails of membrane proteins, leading to their selection and concentration. AP50 is a subunit of the plasma membrane adaptor. The complex binds polyphosphoinositide-containing lipids. This Gallus gallus (Chicken) protein is AP-2 complex subunit mu (AP2M1).